The following is a 502-amino-acid chain: Protein DETOXIFICATION 49 (502 aa).

A run of 12 helical transmembrane segments spans residues 41-61, 75-95, 123-143, 153-173, 190-210, 216-236, 267-287, 293-313, 338-358, 372-392, 414-434, and 439-459; these read LPLILTGLLLYSRSMISMLFL, LALGFANITGYSLLSGLSIGM, LLCSLPISILWLNIKKILLFF, AEIFILFSLPDLILQSFLHPI, AFFAVLLHIPINYLLVSSLGL, ALGAIWTNVNLLGFLIIYIVF, VSVCLEWWWYEIMILLCGLLL, VASMGILIQTTALIYIFPSSL, RTGLSLSLGLGLLAMFFALMV, IVKLTSMVLPIIGLCELGNCP, LCCFYFVGMPVAVWLSFFSGF, and LWLGLFAAQGSCLISMLVVLA.

Belongs to the multi antimicrobial extrusion (MATE) (TC 2.A.66.1) family.

It localises to the membrane. The polypeptide is Protein DETOXIFICATION 49 (Arabidopsis thaliana (Mouse-ear cress)).